The sequence spans 223 residues: Urease accessory protein UreG (223 aa).

The interval 1-31 is disordered; that stretch reads MAKHSHDHTHDHHDRPRRVRKPGEPLRIGVG. 32-39 contacts GTP; that stretch reads GPVGSGKT.

The protein belongs to the SIMIBI class G3E GTPase family. UreG subfamily. As to quaternary structure, homodimer. UreD, UreF and UreG form a complex that acts as a GTP-hydrolysis-dependent molecular chaperone, activating the urease apoprotein by helping to assemble the nickel containing metallocenter of UreC. The UreE protein probably delivers the nickel.

The protein resides in the cytoplasm. Facilitates the functional incorporation of the urease nickel metallocenter. This process requires GTP hydrolysis, probably effectuated by UreG. The sequence is that of Urease accessory protein UreG from Mycobacterium marinum (strain ATCC BAA-535 / M).